A 259-amino-acid polypeptide reads, in one-letter code: 3-hydroxypropionyl-coenzyme A dehydratase (259 aa).

Residue E113 is the Nucleophile of the active site. Catalysis depends on E133, which acts as the Proton acceptor.

The protein belongs to the enoyl-CoA hydratase/isomerase family. In terms of assembly, monomer.

The enzyme catalyses 3-hydroxypropanoyl-CoA = acryloyl-CoA + H2O. In terms of biological role, plays a role in autotrophic carbon fixation via the 3-hydroxypropionate/4-hydroxybutyrate cycle. Catalyzes the reversible dehydration of 3-hydroxypropionyl-CoA to form acryloyl-CoA, and the reversible dehydration of (S)-3-hydroxybutyryl-CoA to form crotonyl-CoA. Inactive towards (R)-3-hydroxybutyryl-CoA. The protein is 3-hydroxypropionyl-coenzyme A dehydratase of Metallosphaera sedula (strain ATCC 51363 / DSM 5348 / JCM 9185 / NBRC 15509 / TH2).